A 598-amino-acid chain; its full sequence is Probable translation initiation factor IF-2 (598 aa).

The 223-residue stretch at 3 to 225 folds into the tr-type G domain; that stretch reads LRCPIVSVLG…GLAQRFLEQK (223 aa). A G1 region spans residues 12–19; sequence GHVDHGKT. Residue 12 to 19 participates in GTP binding; sequence GHVDHGKT. The segment at 37–41 is G2; the sequence is GITQH. The G3 stretch occupies residues 76–79; that stretch reads DTPG. GTP-binding positions include 76-80 and 130-133; these read DTPGH and NKVD. The interval 130-133 is G4; it reads NKVD. The segment at 200-202 is G5; the sequence is SAM.

Belongs to the TRAFAC class translation factor GTPase superfamily. Classic translation factor GTPase family. IF-2 subfamily.

Its function is as follows. Function in general translation initiation by promoting the binding of the formylmethionine-tRNA to ribosomes. Seems to function along with eIF-2. The sequence is that of Probable translation initiation factor IF-2 from Methanococcus maripaludis (strain DSM 14266 / JCM 13030 / NBRC 101832 / S2 / LL).